We begin with the raw amino-acid sequence, 205 residues long: Nitrophorin-4 (205 aa).

The first 21 residues, 1-21 (MKSYTSLLAVAILCLFGGVNG), serve as a signal peptide directing secretion. Disulfide bonds link cysteine 23-cysteine 143 and cysteine 62-cysteine 192. Histidine 80 provides a ligand contact to heme.

Belongs to the calycin superfamily. Nitrophorin family. Heme b is required as a cofactor. Salivary gland (at protein level).

The protein localises to the secreted. The catalysed reaction is 3 nitrite + 2 H(+) = 2 nitric oxide + nitrate + H2O. Its function is as follows. Heme-based protein that delivers nitric oxide gas (NO) to the victim while feeding, resulting in vasodilation and inhibition of platelet aggregation. Reversibly binds nitric oxide (NO). Also binds tightly to histamine, which is released by the host to induce wound healing. NO release is pH dependent and linked to loop dynamics. The sequence is that of Nitrophorin-4 from Rhodnius prolixus (Triatomid bug).